Reading from the N-terminus, the 389-residue chain is Trans-2-enoyl-CoA reductase [NADH] (389 aa).

Residues 47 to 52, 73 to 74, 110 to 111, and 138 to 139 contribute to the NAD(+) site; these read GASTGY, FE, DA, and LA. Residue tyrosine 224 coordinates substrate. Tyrosine 234 acts as the Proton donor in catalysis. Residues lysine 243 and 272-274 each bind NAD(+); that span reads LVT.

The protein belongs to the TER reductase family. Monomer.

The enzyme catalyses a 2,3-saturated acyl-CoA + NAD(+) = a (2E)-enoyl-CoA + NADH + H(+). It participates in lipid metabolism; fatty acid biosynthesis. Functionally, involved in the fatty acid synthesis (FAS II). Catalyzes the reduction of a carbon-carbon double bond in an enoyl moiety that is covalently linked to a coenzyme A (CoA). The sequence is that of Trans-2-enoyl-CoA reductase [NADH] from Clostridium perfringens (strain ATCC 13124 / DSM 756 / JCM 1290 / NCIMB 6125 / NCTC 8237 / Type A).